A 271-amino-acid polypeptide reads, in one-letter code: Tryptophan synthase alpha chain (271 aa).

Active-site proton acceptor residues include E49 and D60.

The protein belongs to the TrpA family. Tetramer of two alpha and two beta chains.

The enzyme catalyses (1S,2R)-1-C-(indol-3-yl)glycerol 3-phosphate + L-serine = D-glyceraldehyde 3-phosphate + L-tryptophan + H2O. Its pathway is amino-acid biosynthesis; L-tryptophan biosynthesis; L-tryptophan from chorismate: step 5/5. Functionally, the alpha subunit is responsible for the aldol cleavage of indoleglycerol phosphate to indole and glyceraldehyde 3-phosphate. The polypeptide is Tryptophan synthase alpha chain (Paraburkholderia phymatum (strain DSM 17167 / CIP 108236 / LMG 21445 / STM815) (Burkholderia phymatum)).